The primary structure comprises 101 residues: uncharacterized protein (101 aa).

A helical membrane pass occupies residues 68-90; it reads LAFAFCGRANTFISCFISFASLI.

It localises to the membrane. This is an uncharacterized protein from Saccharomyces cerevisiae (strain ATCC 204508 / S288c) (Baker's yeast).